A 561-amino-acid chain; its full sequence is Methyl-accepting chemotaxis protein CtpM (561 aa).

Topologically, residues 1-11 (MMRLTLKSKVL) are cytoplasmic. Residues 12 to 32 (LLAMVPVLLFALVLSGGAVLI) traverse the membrane as a helical segment. Residues 33 to 205 (LKKQADAEVK…KQDIDERIGT (173 aa)) are Periplasmic-facing. A helical transmembrane segment spans residues 206-226 (LIASIVGIAGVLLVVLLVIGL). The Cytoplasmic segment spans residues 227-561 (AVANAMLRPL…LGRLVGQFRI (335 aa)). Residues 230 to 284 (NAMLRPLHQIRQNLDDIAAGEGDLTRRLPVTSYDELGELAGSFNRFVEKIHGLVR) enclose the HAMP domain. Residues 289–525 (MTGDLKQLVE…EINRSVHQIA (237 aa)) form the Methyl-accepting transducer domain. The disordered stretch occupies residues 333 to 357 (HEVAQSAQRAAEAAQQTDHEGQAAK). The segment covering 336–348 (AQSAQRAAEAAQQ) has biased composition (low complexity).

This sequence belongs to the methyl-accepting chemotaxis (MCP) protein family. In terms of assembly, homodimer. The ligand-binding domain (LBD) is dimeric in the presence and the absence of ligands.

The protein resides in the cell inner membrane. Its function is as follows. Chemotactic-signal transducers respond to changes in the concentration of attractants and repellents in the environment, transduce a signal from the outside to the inside of the cell, and facilitate sensory adaptation through the variation of the level of methylation. Directly recognizes five C4-dicarboxylic acids: L-malic, citramalic, citraconic, bromosuccinic and methylsuccinic acids. Three of the identified ligands act as chemoattractants (L-malic, D,L-bromosuccinic and L-citramalic acids) whereas two of them (L-methylsuccinic and citraconic acids) behave as antagonists by inhibiting the downstream chemotaxis signaling cascade. Antagonists compete with chemoattractants, thereby decreasing the affinity for chemoattractants and the subsequent chemotactic response. Acts through the che chemosensory pathway. This is Methyl-accepting chemotaxis protein CtpM from Pseudomonas aeruginosa (strain ATCC 15692 / DSM 22644 / CIP 104116 / JCM 14847 / LMG 12228 / 1C / PRS 101 / PAO1).